The following is a 662-amino-acid chain: Threonine--tRNA ligase (662 aa).

In terms of domain architecture, TGS spans 1 to 64 (MSQSVSLTFP…ADGKIEIITR (64 aa)). Positions 245-547 (DHRRLGREMD…LIENFAGHMP (303 aa)) are catalytic. Positions 341, 392, and 524 each coordinate Zn(2+).

Belongs to the class-II aminoacyl-tRNA synthetase family. In terms of assembly, homodimer. The cofactor is Zn(2+).

It is found in the cytoplasm. It catalyses the reaction tRNA(Thr) + L-threonine + ATP = L-threonyl-tRNA(Thr) + AMP + diphosphate + H(+). In terms of biological role, catalyzes the attachment of threonine to tRNA(Thr) in a two-step reaction: L-threonine is first activated by ATP to form Thr-AMP and then transferred to the acceptor end of tRNA(Thr). Also edits incorrectly charged L-seryl-tRNA(Thr). This Rhizobium rhizogenes (strain K84 / ATCC BAA-868) (Agrobacterium radiobacter) protein is Threonine--tRNA ligase.